We begin with the raw amino-acid sequence, 546 residues long: Glucose-6-phosphate isomerase (546 aa).

Glutamate 355 functions as the Proton donor in the catalytic mechanism. Residues histidine 386 and lysine 510 contribute to the active site.

This sequence belongs to the GPI family.

The protein localises to the cytoplasm. The catalysed reaction is alpha-D-glucose 6-phosphate = beta-D-fructose 6-phosphate. Its pathway is carbohydrate biosynthesis; gluconeogenesis. The protein operates within carbohydrate degradation; glycolysis; D-glyceraldehyde 3-phosphate and glycerone phosphate from D-glucose: step 2/4. Its function is as follows. Catalyzes the reversible isomerization of glucose-6-phosphate to fructose-6-phosphate. This Buchnera aphidicola subsp. Cinara cedri (strain Cc) protein is Glucose-6-phosphate isomerase.